Here is a 243-residue protein sequence, read N- to C-terminus: GTP cyclohydrolase 1 type 2 (243 aa).

His-63, His-64, Asp-102, His-209, and Glu-213 together coordinate a divalent metal cation.

This sequence belongs to the GTP cyclohydrolase I type 2/NIF3 family. Homohexamer.

The enzyme catalyses GTP + H2O = 7,8-dihydroneopterin 3'-triphosphate + formate + H(+). It participates in cofactor biosynthesis; 7,8-dihydroneopterin triphosphate biosynthesis; 7,8-dihydroneopterin triphosphate from GTP: step 1/1. Functionally, converts GTP to dihydroneopterin triphosphate. Is not active with GDP, GMP, ATP, CTP or UTP as substrate. The sequence is that of GTP cyclohydrolase 1 type 2 from Helicobacter pylori (strain ATCC 700392 / 26695) (Campylobacter pylori).